Reading from the N-terminus, the 887-residue chain is Alanine--tRNA ligase (887 aa).

Zn(2+)-binding residues include H564, H568, C676, and H680.

Belongs to the class-II aminoacyl-tRNA synthetase family. It depends on Zn(2+) as a cofactor.

The protein resides in the cytoplasm. The enzyme catalyses tRNA(Ala) + L-alanine + ATP = L-alanyl-tRNA(Ala) + AMP + diphosphate. Its function is as follows. Catalyzes the attachment of alanine to tRNA(Ala) in a two-step reaction: alanine is first activated by ATP to form Ala-AMP and then transferred to the acceptor end of tRNA(Ala). Also edits incorrectly charged Ser-tRNA(Ala) and Gly-tRNA(Ala) via its editing domain. The protein is Alanine--tRNA ligase of Rhizobium meliloti (strain 1021) (Ensifer meliloti).